A 145-amino-acid chain; its full sequence is uncharacterized protein (145 aa).

A run of 3 helical transmembrane segments spans residues 3–23 (VGII…GIGG), 83–103 (YVID…YLVP), and 105–125 (LSLL…MLWI).

The protein resides in the cell membrane. This is an uncharacterized protein from Methanocaldococcus jannaschii (strain ATCC 43067 / DSM 2661 / JAL-1 / JCM 10045 / NBRC 100440) (Methanococcus jannaschii).